We begin with the raw amino-acid sequence, 217 residues long: Octanoyltransferase (217 aa).

A BPL/LPL catalytic domain is found at 32–207; the sequence is SDSPDELWIV…TLSQLLGYQQ (176 aa). Substrate-binding positions include 71–78, 138–140, and 151–153; these read RGGQVTYH, SLG, and GLA. Cys169 (acyl-thioester intermediate) is an active-site residue.

Belongs to the LipB family.

Its subcellular location is the cytoplasm. It carries out the reaction octanoyl-[ACP] + L-lysyl-[protein] = N(6)-octanoyl-L-lysyl-[protein] + holo-[ACP] + H(+). Its pathway is protein modification; protein lipoylation via endogenous pathway; protein N(6)-(lipoyl)lysine from octanoyl-[acyl-carrier-protein]: step 1/2. Catalyzes the transfer of endogenously produced octanoic acid from octanoyl-acyl-carrier-protein onto the lipoyl domains of lipoate-dependent enzymes. Lipoyl-ACP can also act as a substrate although octanoyl-ACP is likely to be the physiological substrate. The polypeptide is Octanoyltransferase (Shewanella sp. (strain MR-7)).